We begin with the raw amino-acid sequence, 466 residues long: Gamma-aminobutyric acid receptor subunit gamma-2 (466 aa).

A signal peptide spans 1–38 (MSSPNTWSTGSTVYSPVFSQKMTLWILLLLSLYPGFTS). The Extracellular portion of the chain corresponds to 39-274 (QKSDDDYEDY…FDLSRRMGYF (236 aa)). 2 N-linked (GlcNAc...) asparagine glycosylation sites follow: asparagine 51 and asparagine 128. Cysteine 189 and cysteine 203 are oxidised to a cystine. A glycan (N-linked (GlcNAc...) asparagine) is linked at asparagine 246. A helical transmembrane segment spans residues 275-295 (TIQTYIPCTLIVVLSWVSFWI). Topologically, residues 296 to 301 (NKDAVP) are cytoplasmic. Residues 302 to 321 (ARTSLGITTVLTMTTLSTIA) traverse the membrane as a helical segment. The Extracellular segment spans residues 322–333 (RKSLPKVSYVTA). The chain crosses the membrane as a helical span at residues 334-358 (MDLFVSVCFIFVFSALVEYGTLHYF). Residues 359 to 442 (VSNRKPSKDK…IHIRIAKMDS (84 aa)) lie on the Cytoplasmic side of the membrane. Residues 443–463 (YARIFFPTAFCLFNLVYWVSY) form a helical membrane-spanning segment. Residues 464–466 (LYL) lie on the Extracellular side of the membrane.

This sequence belongs to the ligand-gated ion channel (TC 1.A.9) family. Gamma-aminobutyric acid receptor (TC 1.A.9.5) subfamily. GABRG2 sub-subfamily. As to quaternary structure, heteropentamer, formed by a combination of alpha (GABRA1-6), beta (GABRB1-3), gamma (GABRG1-3), delta (GABRD), epsilon (GABRE), rho (GABRR1-3), pi (GABRP) and theta (GABRQ) chains, each subunit exhibiting distinct physiological and pharmacological properties. Interacts with GABARAP. Interacts with KIF21B. Identified in a complex of 720 kDa composed of LHFPL4, NLGN2, GABRA1, GABRB2, GABRG2 and GABRB3. Interacts with LHFPL4. Interacts with SHISA7; interaction leads to the regulation of GABA(A) receptor trafficking, channel deactivation kinetics and pharmacology. Palmitoylated by ZDHHC3/GODZ; required for the accumulation of GABA(A) receptors at the postsynaptic membrane of inhibitory GABAergic synapses. Post-translationally, glycosylated. In terms of tissue distribution, expressed in brain (at protein level). Expressed in lungs, in alveolar epithelium.

Its subcellular location is the postsynaptic cell membrane. The protein resides in the cell membrane. It is found in the cell projection. The protein localises to the dendrite. It localises to the cytoplasmic vesicle membrane. The enzyme catalyses chloride(in) = chloride(out). With respect to regulation, allosterically activated by benzodiazepines. Activated by pentobarbital. Inhibited by the antagonist bicuculline. Inhibited by zinc ions. Potentiated by histamine. In terms of biological role, gamma subunit of the heteropentameric ligand-gated chloride channel gated by gamma-aminobutyric acid (GABA), a major inhibitory neurotransmitter in the brain. GABA-gated chloride channels, also named GABA(A) receptors (GABAAR), consist of five subunits arranged around a central pore and contain GABA active binding site(s) located at the alpha and beta subunit interface(s). When activated by GABA, GABAARs selectively allow the flow of chloride anions across the cell membrane down their electrochemical gradient. Gamma-2/GABRG2-containing GABAARs are found at both synaptic and extrasynaptic sites. Chloride influx into the postsynaptic neuron following GABAAR opening decreases the neuron ability to generate a new action potential, thereby reducing nerve transmission. GABAARs containing alpha-1 and beta-2 or -3 subunits exhibit synaptogenic activity; the gamma-2 subunit being necessary but not sufficient to induce rapid synaptic contacts formation. Extrasynaptic gamma-2-containing receptors contribute to the tonic GABAergic inhibition. GABAARs function also as histamine receptor where histamine binds at the interface of two neighboring beta subunits and potentiates GABA response in a gamma-2 subunit-controlled manner. This Rattus norvegicus (Rat) protein is Gamma-aminobutyric acid receptor subunit gamma-2.